A 450-amino-acid polypeptide reads, in one-letter code: Protein DA1-related 3 (450 aa).

A coiled-coil region spans residues 1–46; it reads MVRRKRQEEDEKIEIERVKEESLKLAKQAEEKRRLEESKEQGKRIQ. 2 stretches are compositionally biased toward basic and acidic residues: residues 27-47 and 56-69; these read KQAE…RIQV and TSKD…SKDV. Residues 27-87 are disordered; that stretch reads KQAEEKRRLE…PSIDGKSEIG (61 aa).

In Arabidopsis thaliana (Mouse-ear cress), this protein is Protein DA1-related 3 (DAR3).